Here is a 330-residue protein sequence, read N- to C-terminus: Beta-ketoacyl-[acyl-carrier-protein] synthase III (330 aa).

Residues Cys-115 and His-255 contribute to the active site. Residues 256–260 (QANVR) form an ACP-binding region. Asn-285 is an active-site residue.

This sequence belongs to the thiolase-like superfamily. FabH family. Homodimer.

The protein localises to the cytoplasm. The catalysed reaction is malonyl-[ACP] + acetyl-CoA + H(+) = 3-oxobutanoyl-[ACP] + CO2 + CoA. Its pathway is lipid metabolism; fatty acid biosynthesis. Its function is as follows. Catalyzes the condensation reaction of fatty acid synthesis by the addition to an acyl acceptor of two carbons from malonyl-ACP. Catalyzes the first condensation reaction which initiates fatty acid synthesis and may therefore play a role in governing the total rate of fatty acid production. Possesses both acetoacetyl-ACP synthase and acetyl transacylase activities. Its substrate specificity determines the biosynthesis of branched-chain and/or straight-chain of fatty acids. The protein is Beta-ketoacyl-[acyl-carrier-protein] synthase III of Symbiobacterium thermophilum (strain DSM 24528 / JCM 14929 / IAM 14863 / T).